A 258-amino-acid chain; its full sequence is Synapse differentiation-inducing gene protein 1 (258 aa).

Over 1–181 the chain is Cytoplasmic; sequence MDGIVEQKSV…NFLMMPPRDH (181 aa). Ser137 bears the Phosphoserine mark. A helical membrane pass occupies residues 182–202; that stretch reads LGLSVFSMLCCFWPLGIAAFY. The Extracellular portion of the chain corresponds to 203–228; sequence LSHETNKAVAKGDFHQASTSSRRALF. Positions 229-249 form an intramembrane region, helical; that stretch reads LAVLSITIGTGIYVGVAVALI. Residues 250–258 lie on the Extracellular side of the membrane; sequence AYLSKNNHL.

Belongs to the CD225/Dispanin family. As to quaternary structure, homodimer. Interacts with GRIA1 and GRIA2. Enriched in the cerebellum and also expressed in the neocortex and modestly in the hippocampus (at protein level). Expressed in hippocampal neurons, both in cell body and neurites, however its presence is enriched at excitatory synapses and also found in postsynaptic cells.

The protein localises to the cell membrane. Its subcellular location is the early endosome membrane. It localises to the postsynaptic density membrane. It is found in the synapse. The protein resides in the cell projection. The protein localises to the dendrite. Its subcellular location is the dendritic spine. In terms of biological role, may regulate AMPA receptor content at nascent synapses, and have a role in postsynaptic development and maturation. In Rattus norvegicus (Rat), this protein is Synapse differentiation-inducing gene protein 1 (Syndig1).